The sequence spans 441 residues: G2/mitotic-specific cyclin-2 (441 aa).

This sequence belongs to the cyclin family. Cyclin AB subfamily. Interacts with the CDC2 and CDK2 protein kinases to form a serine/threonine kinase holoenzyme complex. The cyclin subunit imparts substrate specificity to the complex.

Functionally, essential for the control of the cell cycle at the G2/M (mitosis) transition. G2/M cyclins accumulate steadily during G2 and are abruptly destroyed at mitosis. The sequence is that of G2/mitotic-specific cyclin-2 from Antirrhinum majus (Garden snapdragon).